Here is a 353-residue protein sequence, read N- to C-terminus: MTAILERRESTSLWGRFCNWITSTENRLYIGWFGVLMIPTLLTATSVFIIAFIAAPPVDIDGIREPVSGSLLYGNNIISGAIIPTSAAIGLHFYPIWEAASVDEWLYNGGPYELIVLHFLLGVACYMGREWELSFRLGMRPWIAVAYSAPVAAATAVFLIYPIGQGSFSDGMPLGISGTFNFMIVFQAEHNILMHPFHMLGVAGVFGGSLFSAMHGSLVTSSLIRETTENESANEGYKFGQEEETYNIVAAHGYFGRLIFQYASFNNSRSLHFFLAAWPVVGIWFTALGISTMAFNLNGFNFNQSVVDSQGRVINTWADIINRANLGMEVMHERNAHNFPLDLAAVEVPAING.

Position 2 is an N-acetylthreonine (Thr2). At Thr2 the chain carries Phosphothreonine. 3 helical membrane passes run 29–46 (YIGWFGVLMIPTLLTATS), 118–133 (HFLLGVACYMGREWEL), and 142–156 (WIAVAYSAPVAAATA). His118 contacts chlorophyll a. Tyr126 serves as a coordination point for pheophytin a. [CaMn4O5] cluster is bound by residues Asp170 and Glu189. Residues 197–218 (FHMLGVAGVFGGSLFSAMHGSL) traverse the membrane as a helical segment. His198 contacts chlorophyll a. Residues His215 and 264–265 (SF) each bind a quinone. His215 is a binding site for Fe cation. His272 provides a ligand contact to Fe cation. Residues 274-288 (FLAAWPVVGIWFTAL) form a helical membrane-spanning segment. Positions 332, 333, 342, and 344 each coordinate [CaMn4O5] cluster. Positions 345–353 (AVEVPAING) are excised as a propeptide.

This sequence belongs to the reaction center PufL/M/PsbA/D family. As to quaternary structure, PSII is composed of 1 copy each of membrane proteins PsbA, PsbB, PsbC, PsbD, PsbE, PsbF, PsbH, PsbI, PsbJ, PsbK, PsbL, PsbM, PsbT, PsbX, PsbY, PsbZ, Psb30/Ycf12, at least 3 peripheral proteins of the oxygen-evolving complex and a large number of cofactors. It forms dimeric complexes. The D1/D2 heterodimer binds P680, chlorophylls that are the primary electron donor of PSII, and subsequent electron acceptors. It shares a non-heme iron and each subunit binds pheophytin, quinone, additional chlorophylls, carotenoids and lipids. D1 provides most of the ligands for the Mn4-Ca-O5 cluster of the oxygen-evolving complex (OEC). There is also a Cl(-1) ion associated with D1 and D2, which is required for oxygen evolution. The PSII complex binds additional chlorophylls, carotenoids and specific lipids. serves as cofactor. Post-translationally, tyr-161 forms a radical intermediate that is referred to as redox-active TyrZ, YZ or Y-Z. C-terminally processed by CTPA; processing is essential to allow assembly of the oxygen-evolving complex and thus photosynthetic growth.

The protein resides in the plastid. It localises to the chloroplast thylakoid membrane. The catalysed reaction is 2 a plastoquinone + 4 hnu + 2 H2O = 2 a plastoquinol + O2. Its function is as follows. Photosystem II (PSII) is a light-driven water:plastoquinone oxidoreductase that uses light energy to abstract electrons from H(2)O, generating O(2) and a proton gradient subsequently used for ATP formation. It consists of a core antenna complex that captures photons, and an electron transfer chain that converts photonic excitation into a charge separation. The D1/D2 (PsbA/PsbD) reaction center heterodimer binds P680, the primary electron donor of PSII as well as several subsequent electron acceptors. This is Photosystem II protein D1 from Hordeum vulgare (Barley).